Consider the following 103-residue polypeptide: Co-chaperonin GroES (103 aa).

Positions 31–67 (GGILLPDTAKEKPQVGEVAQVGPGKRNEDGSRQSPEV) are disordered.

The protein belongs to the GroES chaperonin family. Heptamer of 7 subunits arranged in a ring. Interacts with the chaperonin GroEL.

The protein resides in the cytoplasm. In terms of biological role, together with the chaperonin GroEL, plays an essential role in assisting protein folding. The GroEL-GroES system forms a nano-cage that allows encapsulation of the non-native substrate proteins and provides a physical environment optimized to promote and accelerate protein folding. GroES binds to the apical surface of the GroEL ring, thereby capping the opening of the GroEL channel. The protein is Co-chaperonin GroES of Prochlorococcus marinus (strain NATL2A).